A 469-amino-acid chain; its full sequence is Cysteine--tRNA ligase (469 aa).

C28 serves as a coordination point for Zn(2+). Positions 30–40 match the 'HIGH' region motif; sequence PTVYNYIHIGN. Zn(2+) contacts are provided by C213, H238, and E242. Positions 270 to 274 match the 'KMSKS' region motif; that stretch reads KMSKS. K273 is an ATP binding site.

This sequence belongs to the class-I aminoacyl-tRNA synthetase family. As to quaternary structure, monomer. The cofactor is Zn(2+).

It localises to the cytoplasm. It catalyses the reaction tRNA(Cys) + L-cysteine + ATP = L-cysteinyl-tRNA(Cys) + AMP + diphosphate. The polypeptide is Cysteine--tRNA ligase (Leuconostoc citreum (strain KM20)).